We begin with the raw amino-acid sequence, 193 residues long: Pyridoxal 5'-phosphate synthase subunit PdxT (193 aa).

An L-glutamine-binding site is contributed by 48 to 50 (GES). Cysteine 80 serves as the catalytic Nucleophile. Residues arginine 109 and 137–138 (IR) each bind L-glutamine. Catalysis depends on charge relay system residues histidine 173 and glutamate 175.

It belongs to the glutaminase PdxT/SNO family. In the presence of PdxS, forms a dodecamer of heterodimers. Only shows activity in the heterodimer.

It catalyses the reaction aldehydo-D-ribose 5-phosphate + D-glyceraldehyde 3-phosphate + L-glutamine = pyridoxal 5'-phosphate + L-glutamate + phosphate + 3 H2O + H(+). It carries out the reaction L-glutamine + H2O = L-glutamate + NH4(+). The protein operates within cofactor biosynthesis; pyridoxal 5'-phosphate biosynthesis. Catalyzes the hydrolysis of glutamine to glutamate and ammonia as part of the biosynthesis of pyridoxal 5'-phosphate. The resulting ammonia molecule is channeled to the active site of PdxS. The chain is Pyridoxal 5'-phosphate synthase subunit PdxT from Mycobacteroides abscessus (strain ATCC 19977 / DSM 44196 / CCUG 20993 / CIP 104536 / JCM 13569 / NCTC 13031 / TMC 1543 / L948) (Mycobacterium abscessus).